The chain runs to 291 residues: Methyl-CpG-binding domain protein 3 (291 aa).

The 72-residue stretch at 1–72 (MERKRWECPA…DFRTGKMLMS (72 aa)) folds into the MBD domain. The segment at 1-80 (MERKRWECPA…MSKMNKSRQR (80 aa)) is required for interaction with MBD2. Phosphoserine is present on Ser-56. The tract at residues 60 to 80 (STFDFRTGKMLMSKMNKSRQR) is required for interaction with MBD3L2. Residue Lys-73 forms a Glycyl lysine isopeptide (Lys-Gly) (interchain with G-Cter in SUMO2) linkage. Residue Ser-85 is modified to Phosphoserine. Glycyl lysine isopeptide (Lys-Gly) (interchain with G-Cter in SUMO2) cross-links involve residues Lys-90 and Lys-92. Residue Ser-144 is modified to Phosphoserine. Residues 216 to 245 (KAFMVTDEDIRKQEELVQQVRKRLEEALMA) are a coiled coil. Residues 254–267 (LARDGEAPLDKACA) are compositionally biased toward basic and acidic residues. Residues 254-291 (LARDGEAPLDKACAEDDDEEDEEEEEEEPDPDPEMEHV) are disordered. A compositionally biased stretch (acidic residues) spans 268 to 291 (EDDDEEDEEEEEEEPDPDPEMEHV).

As to quaternary structure, heterodimer (via N-terminus) with MBD2. Component of the MeCP1 histone deacetylase complex. Component of the nucleosome remodeling and deacetylase (NuRD) repressor complex, composed of core proteins MTA1, MTA2, MTA3, RBBP4, RBBP7, HDAC1, HDAC2, MBD2, MBD3, and peripherally associated proteins CDK2AP1, CDK2AP2, GATAD2A, GATAD2B, CHD3, CHD4 and CHD5. The exact stoichiometry of the NuRD complex is unknown, and some subunits such as MBD2 and MBD3, GATAD2A and GATAD2B, and CHD3, CHD4 and CHD5 define mutually exclusive NuRD complexes. Interacts with MBD3L2 (via N-terminus); the interaction is direct. Interacts with BCL6. Interacts with CDK2AP1. Interacts with HDAC1. Interacts with MTA2. Interacts with DNMT1. Interacts with GATAD2A. Interacts with GATAD2B. Does not interact with PWWP2A. Does not interact with PWWP2B.

The protein localises to the nucleus. It is found in the chromosome. Its function is as follows. Acts as a component of the histone deacetylase NuRD complex which participates in the remodeling of chromatin. Acts as transcriptional repressor and plays a role in gene silencing. Does not bind to methylated DNA by itself. Binds to a lesser degree DNA containing unmethylated CpG dinucleotides. Recruits histone deacetylases and DNA methyltransferases. This is Methyl-CpG-binding domain protein 3 (MBD3) from Homo sapiens (Human).